A 195-amino-acid chain; its full sequence is Pyruvoyl-dependent arginine decarboxylase AaxB (195 aa).

Position 53 is a pyruvic acid (Ser) (serine 53).

Belongs to the pyruvoyl-dependent arginine decarboxylase family. Trimer of an alpha-beta dimer. The cofactor is pyruvate.

It is found in the cytoplasm. The catalysed reaction is L-arginine + H(+) = agmatine + CO2. In terms of biological role, part of the AaxABC system, catalyzes the decarboxylation of L-arginine. The arginine uptake by the bacterium in the macrophage may be a virulence factor against the host innate immune response. The polypeptide is Pyruvoyl-dependent arginine decarboxylase AaxB (aaxB) (Chlamydia trachomatis serovar D (strain ATCC VR-885 / DSM 19411 / UW-3/Cx)).